A 153-amino-acid polypeptide reads, in one-letter code: SsrA-binding protein (153 aa).

The segment at 129 to 153 is disordered; that stretch reads KREDMKKKDQSREMAQALRERSKSH.

Belongs to the SmpB family.

It localises to the cytoplasm. Functionally, required for rescue of stalled ribosomes mediated by trans-translation. Binds to transfer-messenger RNA (tmRNA), required for stable association of tmRNA with ribosomes. tmRNA and SmpB together mimic tRNA shape, replacing the anticodon stem-loop with SmpB. tmRNA is encoded by the ssrA gene; the 2 termini fold to resemble tRNA(Ala) and it encodes a 'tag peptide', a short internal open reading frame. During trans-translation Ala-aminoacylated tmRNA acts like a tRNA, entering the A-site of stalled ribosomes, displacing the stalled mRNA. The ribosome then switches to translate the ORF on the tmRNA; the nascent peptide is terminated with the 'tag peptide' encoded by the tmRNA and targeted for degradation. The ribosome is freed to recommence translation, which seems to be the essential function of trans-translation. This is SsrA-binding protein from Geobacter metallireducens (strain ATCC 53774 / DSM 7210 / GS-15).